A 168-amino-acid polypeptide reads, in one-letter code: Peptidyl-prolyl cis-trans isomerase-like 3 (168 aa).

Residues M1–V156 enclose the PPIase cyclophilin-type domain.

This sequence belongs to the cyclophilin-type PPIase family. PPIL3 subfamily.

It carries out the reaction [protein]-peptidylproline (omega=180) = [protein]-peptidylproline (omega=0). Functionally, PPIases accelerate the folding of proteins. It catalyzes the cis-trans isomerization of proline imidic peptide bonds in oligopeptides. The protein is Peptidyl-prolyl cis-trans isomerase-like 3 (CYP10) of Mycosarcoma maydis (Corn smut fungus).